We begin with the raw amino-acid sequence, 358 residues long: Peptide chain release factor 1 (358 aa).

Gln234 carries the N5-methylglutamine modification. A disordered region spans residues 283-306 (ERLHSERAGQRKSMVGSGDRSERI).

It belongs to the prokaryotic/mitochondrial release factor family. In terms of processing, methylated by PrmC. Methylation increases the termination efficiency of RF1.

Its subcellular location is the cytoplasm. In terms of biological role, peptide chain release factor 1 directs the termination of translation in response to the peptide chain termination codons UAG and UAA. This Zymomonas mobilis subsp. mobilis (strain ATCC 31821 / ZM4 / CP4) protein is Peptide chain release factor 1.